A 462-amino-acid polypeptide reads, in one-letter code: Arginine biosynthesis bifunctional protein ArgJ, mitochondrial (462 aa).

Positions 200, 228, 239, 326, 457, and 462 each coordinate substrate. T239 acts as the Nucleophile in catalysis.

The protein belongs to the ArgJ family. Heterodimer of an alpha and a beta chain. In terms of processing, the alpha and beta chains are autoproteolytically processed from a single precursor protein within the mitochondrion.

It is found in the mitochondrion matrix. It catalyses the reaction N(2)-acetyl-L-ornithine + L-glutamate = N-acetyl-L-glutamate + L-ornithine. The catalysed reaction is L-glutamate + acetyl-CoA = N-acetyl-L-glutamate + CoA + H(+). Its pathway is amino-acid biosynthesis; L-arginine biosynthesis; L-ornithine and N-acetyl-L-glutamate from L-glutamate and N(2)-acetyl-L-ornithine (cyclic): step 1/1. It participates in amino-acid biosynthesis; L-arginine biosynthesis; N(2)-acetyl-L-ornithine from L-glutamate: step 1/4. Its function is as follows. Catalyzes two activities which are involved in the cyclic version of arginine biosynthesis: the synthesis of acetylglutamate from glutamate and acetyl-CoA, and of ornithine by transacetylation between acetylornithine and glutamate. This Pyrenophora tritici-repentis (strain Pt-1C-BFP) (Wheat tan spot fungus) protein is Arginine biosynthesis bifunctional protein ArgJ, mitochondrial.